We begin with the raw amino-acid sequence, 266 residues long: Small ribosomal subunit protein eS1 (266 aa).

A disordered region spans residues 235–266; sequence GGAGGAAKASGDDTGAKVERADGYEPPIQETV. The segment covering 244–257 has biased composition (basic and acidic residues); the sequence is SGDDTGAKVERADG.

It belongs to the eukaryotic ribosomal protein eS1 family. In terms of assembly, component of the small ribosomal subunit. Mature ribosomes consist of a small (40S) and a large (60S) subunit. The 40S subunit contains about 33 different proteins and 1 molecule of RNA (18S). The 60S subunit contains about 49 different proteins and 3 molecules of RNA (28S, 5.8S and 5S).

Its subcellular location is the cytoplasm. In terms of biological role, component of the small ribosomal subunit. The ribosome is a large ribonucleoprotein complex responsible for the synthesis of proteins in the cell. This chain is Small ribosomal subunit protein eS1 (rps3a), found in Oryzias latipes (Japanese rice fish).